The chain runs to 179 residues: Ribosomal-protein-serine acetyltransferase (179 aa).

One can recognise an N-acetyltransferase domain in the interval 11-172 (LELHAVAENH…NDAYDDVNLY (162 aa)).

It belongs to the acetyltransferase family. RimL subfamily.

The protein resides in the cytoplasm. The catalysed reaction is N-terminal L-seryl-[ribosomal protein bL12] + acetyl-CoA = N-terminal N(alpha)-acetyl-L-seryl-[ribosomal protein bL12] + CoA + H(+). In terms of biological role, this enzyme acetylates the N-terminal serine of ribosomal protein bL12, converting it into the acetylated form of bL12 known as bL7. This Escherichia coli (strain K12) protein is Ribosomal-protein-serine acetyltransferase.